The following is a 456-amino-acid chain: tRNA modification GTPase MnmE (456 aa).

The (6S)-5-formyl-5,6,7,8-tetrahydrofolate site is built by arginine 24, glutamate 81, and lysine 120. In terms of domain architecture, TrmE-type G spans 216–379 (GMTVVIAGRP…LREHLKACMG (164 aa)). Asparagine 226 contributes to the K(+) binding site. Residues 226-231 (NAGKSS), 245-251 (TEIAGTT), 270-273 (DTAG), 335-338 (NKAD), and 359-361 (SAR) each bind GTP. Serine 230 provides a ligand contact to Mg(2+). The K(+) site is built by threonine 245, isoleucine 247, and threonine 250. A Mg(2+)-binding site is contributed by threonine 251. Position 456 (lysine 456) interacts with (6S)-5-formyl-5,6,7,8-tetrahydrofolate.

It belongs to the TRAFAC class TrmE-Era-EngA-EngB-Septin-like GTPase superfamily. TrmE GTPase family. Homodimer. Heterotetramer of two MnmE and two MnmG subunits. K(+) serves as cofactor.

The protein localises to the cytoplasm. In terms of biological role, exhibits a very high intrinsic GTPase hydrolysis rate. Involved in the addition of a carboxymethylaminomethyl (cmnm) group at the wobble position (U34) of certain tRNAs, forming tRNA-cmnm(5)s(2)U34. In Pseudomonas syringae pv. syringae (strain B728a), this protein is tRNA modification GTPase MnmE.